The chain runs to 262 residues: MNKFLIIDGLNLVRRIYAAIPDETDMQSLTERVSSACTKLLRVHRPTHVAIVWDGDEISWRKQLYPDYKKGRKPMPEPLAQGLVALQDHLTAMHIGSIYAAAEADDVIATLAIKTAKAQGEAIIVSTDKGFSQLNHRQISQWDHFNQQYLDIAALEQKLGVERSQFLDLMALAGDSGNKIPGIAGIGPKSAAELLKTFRSLPTLFSSLSNLGAKQAKKLAEGKEMARLSYKLAQLQTDLPLNINLKDFRVIDSLPEKTINQD.

Aspartate 105 provides a ligand contact to Mg(2+). Residues 162–254 (ERSQFLDLMA…LKDFRVIDSL (93 aa)) enclose the 5'-3' exonuclease domain. K(+) contacts are provided by leucine 172, alanine 173, proline 181, isoleucine 183, and isoleucine 186. Residues 185-190 (GIGPKS) form an interaction with DNA region.

It belongs to the Xni family. Mg(2+) is required as a cofactor. It depends on K(+) as a cofactor.

Functionally, has flap endonuclease activity. During DNA replication, flap endonucleases cleave the 5'-overhanging flap structure that is generated by displacement synthesis when DNA polymerase encounters the 5'-end of a downstream Okazaki fragment. This chain is Flap endonuclease Xni, found in Shewanella baltica (strain OS195).